A 314-amino-acid chain; its full sequence is Ribosomal RNA small subunit methyltransferase H (314 aa).

S-adenosyl-L-methionine-binding positions include 36–38 (AGH), D56, F83, D104, and Q111.

This sequence belongs to the methyltransferase superfamily. RsmH family.

The protein localises to the cytoplasm. It catalyses the reaction cytidine(1402) in 16S rRNA + S-adenosyl-L-methionine = N(4)-methylcytidine(1402) in 16S rRNA + S-adenosyl-L-homocysteine + H(+). Its function is as follows. Specifically methylates the N4 position of cytidine in position 1402 (C1402) of 16S rRNA. The protein is Ribosomal RNA small subunit methyltransferase H of Brevibacillus brevis (strain 47 / JCM 6285 / NBRC 100599).